The following is a 428-amino-acid chain: Dihydroorotase (428 aa).

Residues histidine 59 and histidine 61 each contribute to the Zn(2+) site. Substrate contacts are provided by residues 61 to 63 and asparagine 93; that span reads HLR. Residues aspartate 151, histidine 178, and histidine 231 each contribute to the Zn(2+) site. A substrate-binding site is contributed by asparagine 277. Aspartate 304 provides a ligand contact to Zn(2+). Aspartate 304 is a catalytic residue. Substrate contacts are provided by residues histidine 308 and 322–323; that span reads FG.

This sequence belongs to the metallo-dependent hydrolases superfamily. DHOase family. Class I DHOase subfamily. Zn(2+) serves as cofactor.

The enzyme catalyses (S)-dihydroorotate + H2O = N-carbamoyl-L-aspartate + H(+). Its pathway is pyrimidine metabolism; UMP biosynthesis via de novo pathway; (S)-dihydroorotate from bicarbonate: step 3/3. Its function is as follows. Catalyzes the reversible cyclization of carbamoyl aspartate to dihydroorotate. This is Dihydroorotase from Bacillus pumilus (strain SAFR-032).